Here is a 301-residue protein sequence, read N- to C-terminus: N-acetylmuramic acid 6-phosphate etherase (301 aa).

Positions 57–220 constitute an SIS domain; the sequence is IAETFMKNGR…TTGAMIKTGK (164 aa). Residue glutamate 85 is the Proton donor of the active site. Glutamate 116 is an active-site residue.

This sequence belongs to the GCKR-like family. MurNAc-6-P etherase subfamily. Homodimer.

It catalyses the reaction N-acetyl-D-muramate 6-phosphate + H2O = N-acetyl-D-glucosamine 6-phosphate + (R)-lactate. It participates in amino-sugar metabolism; 1,6-anhydro-N-acetylmuramate degradation. The protein operates within amino-sugar metabolism; N-acetylmuramate degradation. Its pathway is cell wall biogenesis; peptidoglycan recycling. Its function is as follows. Specifically catalyzes the cleavage of the D-lactyl ether substituent of MurNAc 6-phosphate, producing GlcNAc 6-phosphate and D-lactate. Together with AnmK, is also required for the utilization of anhydro-N-acetylmuramic acid (anhMurNAc) either imported from the medium or derived from its own cell wall murein, and thus plays a role in cell wall recycling. In Pasteurella multocida (strain Pm70), this protein is N-acetylmuramic acid 6-phosphate etherase.